We begin with the raw amino-acid sequence, 356 residues long: Heat-inducible transcription repressor HrcA (356 aa).

Belongs to the HrcA family.

Its function is as follows. Negative regulator of class I heat shock genes (grpE-dnaK-dnaJ and groELS operons). Prevents heat-shock induction of these operons. This is Heat-inducible transcription repressor HrcA from Gluconobacter oxydans (strain 621H) (Gluconobacter suboxydans).